Consider the following 576-residue polypeptide: Ferroportin (576 aa).

Over 1–23 (MPKAGEQARQGGCCGSLANYLTS) the chain is Cytoplasmic. The helical transmembrane segment at 24–53 (AKFLLYLGHSLSTWGDRMWHFAVSVFLVEL) threads the bilayer. Fe cation-binding residues include Asp-39 and His-43. Over 54–57 (YGNS) the chain is Extracellular. A helical transmembrane segment spans residues 58 to 84 (LLLTAVYGLVVAGSVLVLGAIIGDWVD). Residues 85-87 (KNA) lie on the Cytoplasmic side of the membrane. A helical transmembrane segment spans residues 88 to 118 (RLKVAQTSLVVQNVSVILCGIILMMVFLHKN). Residues 119 to 126 (ELLTMYHG) are Extracellular-facing. A helical transmembrane segment spans residues 127–162 (WVLTFCYILIITIADVANLASTATAITIQRDWIVVV). Over 163 to 164 (AG) the chain is Cytoplasmic. The helical transmembrane segment at 165–195 (GDRSKLADMNATIRRIDQLTNILAPMAVGQI) threads the bilayer. Residues 196–202 (MTFGSAV) lie on the Extracellular side of the membrane. Residues 203–229 (IGCGFISGWNLVSMCVEYFLLWKVYQK) form a helical membrane-spanning segment. Over 230–306 (TPALAVKAAL…DGWVSYYNQS (77 aa)) the chain is Cytoplasmic. A helical transmembrane segment spans residues 307–333 (VFLAGMGLAFLYMTVLGFDCITTGYAY). Cys-326 is a Fe cation binding site. Residues 334–338 (TQGLS) lie on the Extracellular side of the membrane. Residues 339–366 (GSILSILMGASAITGIMGTVAFTWLRRK) form a helical membrane-spanning segment. Over 367-368 (CG) the chain is Cytoplasmic. The chain crosses the membrane as a helical span at residues 369–391 (LVRTGLISGFAQLSCLILCVISV). Over 392–458 (FMPGSPLDLS…ETTPKSVPII (67 aa)) the chain is Extracellular. Asn-439 carries an N-linked (GlcNAc...) asparagine glycan. A helical transmembrane segment spans residues 459–488 (SVSLLFAGVIAARIGLWSFDLTVTQLLQEN). Residues 489 to 493 (VIESE) lie on the Cytoplasmic side of the membrane. Residues 494–518 (RGIINGVQNSMNYLLDLLHFIMVIL) form a helical membrane-spanning segment. His-512 serves as a coordination point for Fe cation. Residues 519–521 (APN) lie on the Extracellular side of the membrane. A helical transmembrane segment spans residues 522–547 (PEAFGLLVLISVSFVAMGHIMYFRFA). Topologically, residues 548 to 576 (QKTLGSKLFACGADDEEVTNENQANTSVV) are cytoplasmic.

The protein belongs to the ferroportin (FP) (TC 2.A.100) family. SLC40A subfamily. As to quaternary structure, identified in a complex with STOM. Interacts with HAMP; affinity of the peptide hormone HAMP for SLC40A1 increases by 80-fold in the presence of iron and the interaction promotes SLC40A1 ubiquitination and degradation. Part of a complex composed of SLC40A1/ferroportin, TF/transferrin and HEPH/hephaestin that transfers iron from cells to transferrin. Polyubiquitinated by RNF217; leading to proteasomal degradation. Under conditions of high systemic iron levels, both the hormone peptide hepcidin/HAMP and holo(iron bound)-transferrin/TF induce the ubiquitination, internalization and proteasomal degradation of SLC40A1 to control iron release from cells.

Its subcellular location is the cell membrane. The protein localises to the basolateral cell membrane. It catalyses the reaction Fe(2+)(in) = Fe(2+)(out). During elevated serum iron levels, liver-derived hepcidin/HAMP negatively regulates cell surface ferroportin/SLC40A1 by inducing its ubiquitination, internalization, and degradation. Indeed, hepcidin/HAMP affinity towards ferroportin/SLC40A1 increases by 80-fold in the presence of iron. Its function is as follows. Transports Fe(2+) from the inside of a cell to the outside of the cell, playing a key role for maintaining systemic iron homeostasis. Transports iron from intestinal, splenic, hepatic cells, macrophages and erythrocytes into the blood to provide iron to other tissues. Controls therefore dietary iron uptake, iron recycling by macrophages and erythrocytes, and release of iron stores in hepatocytes. When iron is in excess in serum, circulating HAMP/hepcidin levels increase resulting in a degradation of SLC40A1, thus limiting the iron efflux to plasma. The protein is Ferroportin of Canis lupus familiaris (Dog).